The sequence spans 292 residues: Rab effector Noc2 (292 aa).

The RabBD domain occupies 41–158 (QRKSQSLSPA…KRSGAWFYKG (118 aa)). An FYVE-type zinc finger spans residues 89-146 (GNGLSQCLLCGEVLGFLGSSSVFCKDCRKKVCTKCGIEASPSQKRPLWLCKICSEQRE). Zn(2+) is bound by residues Cys95, Cys98, Cys112, Cys115, Cys120, Cys123, Cys138, and Cys141. Positions 175-292 (PSFRPLPVEP…RTLAGPRGPR (118 aa)) are disordered. Basic and acidic residues predominate over residues 221–235 (LDDRLRPAGVRDPKG). Ser248 is modified (phosphoserine). The span at 257–269 (ASCLSGSQSSLAS) shows a compositional bias: low complexity.

In terms of assembly, recruited to dense-core vesicles through specific interaction with RAB27A in endocrine cells. Interacts with RAB3A, RAB3B, RAB3C and RAB3D. Interacts with ZYX.

The protein localises to the cytoplasm. The protein resides in the cytoplasmic vesicle. Its subcellular location is the secretory vesicle membrane. Its function is as follows. Rab GTPase effector involved in the late steps of regulated exocytosis, both in endocrine and exocrine cells. This chain is Rab effector Noc2 (RPH3AL), found in Bos taurus (Bovine).